Reading from the N-terminus, the 24-residue chain is Citropin-3.1.2 (24 aa).

As to expression, expressed by the dorsal and submental skin glands.

Its subcellular location is the secreted. The polypeptide is Citropin-3.1.2 (Ranoidea citropa (Australian Blue Mountains tree frog)).